The chain runs to 154 residues: Large ribosomal subunit protein uL30 (154 aa).

The tract at residues 114 to 139 is disordered; it reads PTLRLHPPRGGHDGIKHPTKEGGQLG. The segment covering 123 to 133 has biased composition (basic and acidic residues); sequence GGHDGIKHPTK.

It belongs to the universal ribosomal protein uL30 family. In terms of assembly, part of the 50S ribosomal subunit.

The polypeptide is Large ribosomal subunit protein uL30 (Natronomonas pharaonis (strain ATCC 35678 / DSM 2160 / CIP 103997 / JCM 8858 / NBRC 14720 / NCIMB 2260 / Gabara) (Halobacterium pharaonis)).